The chain runs to 405 residues: Arginine biosynthesis bifunctional protein ArgJ (405 aa).

6 residues coordinate substrate: threonine 152, lysine 178, threonine 189, glutamate 276, asparagine 400, and threonine 405. Threonine 189 acts as the Nucleophile in catalysis.

Belongs to the ArgJ family. As to quaternary structure, heterotetramer of two alpha and two beta chains.

The protein resides in the cytoplasm. The catalysed reaction is N(2)-acetyl-L-ornithine + L-glutamate = N-acetyl-L-glutamate + L-ornithine. The enzyme catalyses L-glutamate + acetyl-CoA = N-acetyl-L-glutamate + CoA + H(+). Its pathway is amino-acid biosynthesis; L-arginine biosynthesis; L-ornithine and N-acetyl-L-glutamate from L-glutamate and N(2)-acetyl-L-ornithine (cyclic): step 1/1. It participates in amino-acid biosynthesis; L-arginine biosynthesis; N(2)-acetyl-L-ornithine from L-glutamate: step 1/4. Functionally, catalyzes two activities which are involved in the cyclic version of arginine biosynthesis: the synthesis of N-acetylglutamate from glutamate and acetyl-CoA as the acetyl donor, and of ornithine by transacetylation between N(2)-acetylornithine and glutamate. The chain is Arginine biosynthesis bifunctional protein ArgJ from Pseudomonas fluorescens (strain ATCC BAA-477 / NRRL B-23932 / Pf-5).